Here is a 109-residue protein sequence, read N- to C-terminus: Arminin 6560 (109 aa).

Residues 1 to 21 (MKCLFGFLFIMLVAFLQDVHG) form the signal peptide. A propeptide spanning residues 22–77 (VDSCIGKPCKVKGEDMKDIKEKKIEDIKEEIKNVKKEIFEDVDDELLDDNIRDDKI) is cleaved from the precursor. Ile-106 is subject to Isoleucine amide.

The protein belongs to the arminin family. Expressed in the ectodermal epithelium.

The protein localises to the secreted. It is found in the target cell membrane. In terms of biological role, antimicrobial peptide with a broad-spectrum antimicrobial activity. Keeps its antibacterial activity under a wide range of salt concentrations that mimic physiological conditions of human blood, which is surprising, since Hydra is an obligate freshwater animal with nearly no salt tolerance. Does not affect red blood cells. The polypeptide is Arminin 6560 (Hydra vulgaris (Hydra)).